The primary structure comprises 306 residues: Lipoyl synthase (306 aa).

Residues cysteine 55, cysteine 60, cysteine 66, cysteine 81, cysteine 85, cysteine 88, and serine 294 each contribute to the [4Fe-4S] cluster site. One can recognise a Radical SAM core domain in the interval tryptophan 67–arginine 283.

This sequence belongs to the radical SAM superfamily. Lipoyl synthase family. [4Fe-4S] cluster serves as cofactor.

The protein localises to the cytoplasm. The catalysed reaction is [[Fe-S] cluster scaffold protein carrying a second [4Fe-4S](2+) cluster] + N(6)-octanoyl-L-lysyl-[protein] + 2 oxidized [2Fe-2S]-[ferredoxin] + 2 S-adenosyl-L-methionine + 4 H(+) = [[Fe-S] cluster scaffold protein] + N(6)-[(R)-dihydrolipoyl]-L-lysyl-[protein] + 4 Fe(3+) + 2 hydrogen sulfide + 2 5'-deoxyadenosine + 2 L-methionine + 2 reduced [2Fe-2S]-[ferredoxin]. Its pathway is protein modification; protein lipoylation via endogenous pathway; protein N(6)-(lipoyl)lysine from octanoyl-[acyl-carrier-protein]: step 2/2. Functionally, catalyzes the radical-mediated insertion of two sulfur atoms into the C-6 and C-8 positions of the octanoyl moiety bound to the lipoyl domains of lipoate-dependent enzymes, thereby converting the octanoylated domains into lipoylated derivatives. The chain is Lipoyl synthase from Chloroflexus aggregans (strain MD-66 / DSM 9485).